A 422-amino-acid chain; its full sequence is CinA-like protein (422 aa).

This sequence belongs to the CinA family.

This chain is CinA-like protein, found in Mycolicibacterium vanbaalenii (strain DSM 7251 / JCM 13017 / BCRC 16820 / KCTC 9966 / NRRL B-24157 / PYR-1) (Mycobacterium vanbaalenii).